Here is a 296-residue protein sequence, read N- to C-terminus: Lipoyl synthase (296 aa).

Residues C37, C42, C48, C63, C67, C70, and S276 each contribute to the [4Fe-4S] cluster site. Residues 49–265 form the Radical SAM core domain; the sequence is WSKKHTTVMI…ERVAKTKGFL (217 aa).

The protein belongs to the radical SAM superfamily. Lipoyl synthase family. The cofactor is [4Fe-4S] cluster.

The protein resides in the cytoplasm. The catalysed reaction is [[Fe-S] cluster scaffold protein carrying a second [4Fe-4S](2+) cluster] + N(6)-octanoyl-L-lysyl-[protein] + 2 oxidized [2Fe-2S]-[ferredoxin] + 2 S-adenosyl-L-methionine + 4 H(+) = [[Fe-S] cluster scaffold protein] + N(6)-[(R)-dihydrolipoyl]-L-lysyl-[protein] + 4 Fe(3+) + 2 hydrogen sulfide + 2 5'-deoxyadenosine + 2 L-methionine + 2 reduced [2Fe-2S]-[ferredoxin]. It participates in protein modification; protein lipoylation via endogenous pathway; protein N(6)-(lipoyl)lysine from octanoyl-[acyl-carrier-protein]: step 2/2. Catalyzes the radical-mediated insertion of two sulfur atoms into the C-6 and C-8 positions of the octanoyl moiety bound to the lipoyl domains of lipoate-dependent enzymes, thereby converting the octanoylated domains into lipoylated derivatives. The protein is Lipoyl synthase of Rickettsia peacockii (strain Rustic).